We begin with the raw amino-acid sequence, 161 residues long: DNA-directed RNA polymerase 18 kDa subunit (161 aa).

It belongs to the poxviridae DNA-directed RNA polymerase 18 kDa subunit family. The DNA-dependent RNA polymerase used for intermediate and late genes expression consists of eight subunits Rpo30/OPG66, Rpo7/OPG90, Rpo22/OPG103, Rpo147/OPG105, Rpo18/OPG119, Rpo19/OPG131, Rpo132/OPG151 and Rpo35/OPG156. The same holoenzyme, with the addition of the transcription-specificity factor OPG109, is used for early gene expression. Apparently non-glycosylated.

The protein localises to the virion. It carries out the reaction RNA(n) + a ribonucleoside 5'-triphosphate = RNA(n+1) + diphosphate. Functionally, part of the DNA-dependent RNA polymerase which catalyzes the transcription of viral DNA into RNA using the four ribonucleoside triphosphates as substrates. Responsible for the transcription of early, intermediate and late genes. DNA-dependent RNA polymerase associates with the early transcription factor (ETF), itself composed of OPG118 and OPG133, thereby allowing the early genes transcription. Late transcription, and probably also intermediate transcription, require newly synthesized RNA polymerase. The chain is DNA-directed RNA polymerase 18 kDa subunit (OPG119) from Cynomys gunnisoni (Gunnison's prairie dog).